The primary structure comprises 340 residues: Arginase 1, mitochondrial (340 aa).

The N-terminal 24 residues, 1–24 (MGGVAAGTRWIHHVRRLSAAKVSA), are a transit peptide targeting the mitochondrion. 4 residues coordinate Mn(2+): histidine 159, aspartate 183, histidine 185, and aspartate 187. Substrate is bound by residues 185-189 (HPDIY) and 193-195 (EGN). Mn(2+)-binding residues include aspartate 268 and aspartate 270. Position 311 (glutamate 311) interacts with substrate.

It belongs to the arginase family. Mn(2+) serves as cofactor.

The protein localises to the mitochondrion. It carries out the reaction L-arginine + H2O = urea + L-ornithine. The protein operates within nitrogen metabolism; urea cycle; L-ornithine and urea from L-arginine: step 1/1. In terms of biological role, catalyzes the hydrolysis of L-arginine to urea and L-ornithine. The latter can be utilized in the urea cycle or as a precursor for the synthesis of both polyamines and proline. The sequence is that of Arginase 1, mitochondrial (ARG1) from Oryza sativa subsp. japonica (Rice).